The following is a 489-amino-acid chain: Rhamnulokinase (489 aa).

13–17 (ASSGR) lines the ATP pocket. Residues Cys-68 and Cys-222 are joined by a disulfide bond. Residues Gly-83 and 236 to 238 (HDT) contribute to the substrate site. Asp-237 (proton acceptor) is an active-site residue. Residue Thr-259 coordinates ATP. Residue Asn-296 participates in substrate binding. Position 304 (Gln-304) interacts with ATP. Cys-353 and Cys-370 form a disulfide bridge. ATP is bound at residue Gly-402. Residues Cys-413 and Cys-417 are joined by a disulfide bond.

Belongs to the rhamnulokinase family. In terms of assembly, monomer. Requires Mg(2+) as cofactor.

It carries out the reaction L-rhamnulose + ATP = L-rhamnulose 1-phosphate + ADP + H(+). It functions in the pathway carbohydrate degradation; L-rhamnose degradation; glycerone phosphate from L-rhamnose: step 2/3. Functionally, involved in the catabolism of L-rhamnose (6-deoxy-L-mannose). Catalyzes the transfer of the gamma-phosphate group from ATP to the 1-hydroxyl group of L-rhamnulose to yield L-rhamnulose 1-phosphate. This chain is Rhamnulokinase, found in Escherichia coli O127:H6 (strain E2348/69 / EPEC).